The primary structure comprises 258 residues: Type III pantothenate kinase (258 aa).

An ATP-binding site is contributed by 6–13 (DAGNTRIK). Residues Y98 and 105 to 108 (GSDR) contribute to the substrate site. D107 serves as the catalytic Proton acceptor. T131 contacts ATP. T184 serves as a coordination point for substrate.

It belongs to the type III pantothenate kinase family. In terms of assembly, homodimer. NH4(+) serves as cofactor. K(+) is required as a cofactor.

The protein resides in the cytoplasm. It catalyses the reaction (R)-pantothenate + ATP = (R)-4'-phosphopantothenate + ADP + H(+). It participates in cofactor biosynthesis; coenzyme A biosynthesis; CoA from (R)-pantothenate: step 1/5. Its function is as follows. Catalyzes the phosphorylation of pantothenate (Pan), the first step in CoA biosynthesis. The protein is Type III pantothenate kinase of Herminiimonas arsenicoxydans.